A 2602-amino-acid polypeptide reads, in one-letter code: Non-reducing polyketide synthase SAT8 (2602 aa).

Cys-130 functions as the Nucleophile; for transacylase activity in the catalytic mechanism. The active-site Proton donor/acceptor; for transacylase activity is the His-249. Positions 379-398 (MLENSTSPPSPAATSSNSHC) are disordered. Over residues 382–396 (NSTSPPSPAATSSNS) the composition is skewed to low complexity. Residues 404–822 (PRDIAIVGMS…GSNAAMVVTQ (419 aa)) form the Ketosynthase family 3 (KS3) domain. Catalysis depends on for beta-ketoacyl synthase activity residues Cys-571, His-706, and His-745. Residues 926-1216 (FGGQMSTFVG…AMARRSLDSN (291 aa)) are malonyl-CoA:ACP transacylase (MAT). An N-terminal hotdog fold region spans residues 1298–1442 (GPLFGLLTFV…GKLDLLSSSE (145 aa)). The PKS/mFAS DH domain occupies 1298-1618 (GPLFGLLTFV…YTRIPRHSMT (321 aa)). Residues 1331 to 1616 (LVIPHIIART…IAYTRIPRHS (286 aa)) are product template (PT) domain. Residue His-1335 is the Proton acceptor; for dehydratase activity of the active site. The segment at 1467–1618 (GDVSGLQGRS…YTRIPRHSMT (152 aa)) is C-terminal hotdog fold. Residue Asp-1524 is the Proton donor; for dehydratase activity of the active site. Positions 1658–1733 (DTLKQTVGQI…AFVRYISKVV (76 aa)) constitute a Carrier domain. Ser-1692 is modified (O-(pantetheine 4'-phosphoryl)serine). The interval 1737-1772 (DDLGTPSHSDNDSHVTGTTATPNSSSASSDTHHGNS) is disordered. Residues 1752–1765 (TGTTATPNSSSASS) are compositionally biased toward low complexity. A methyltransferase domain region spans residues 1979–2150 (VEKVKDDFQG…GYGHVDWTDG (172 aa)). Residues 2229–2530 (IVVVTGATGS…IPLGEWVRKV (302 aa)) form an NADPH-binding domain region.

Pantetheine 4'-phosphate serves as cofactor.

The protein operates within mycotoxin biosynthesis. Functionally, non-reducing polyketide synthase; part of the satratoxin SC1 cluster involved in the biosynthesis of satratoxins, trichothecene mycotoxins that are associated with human food poisonings. Satratoxins are suggested to be made by products of multiple gene clusters (SC1, SC2 and SC3) that encode 21 proteins in all, including polyketide synthases, acetyltransferases, and other enzymes expected to modify the trichothecene skeleton. SC1 encodes 10 proteins, SAT1 to SAT10. The largest are SAT8, which encodes a putative polyketide synthase (PKS) with a conventional non-reducing architecture, and SAT10, a putative protein containing four ankyrin repeats and thus may be involved in protein scaffolding. The putative short-chain reductase SAT3 may assist the PKS in some capacity. SAT6 contains a secretory lipase domain and acts probably as a trichothecene esterase. SAT5 encodes a putative acetyltransferase, and so, with SAT6, may affect endogenous protection from toxicity. The probable transcription factor SAT9 may regulate the expression of the SC1 cluster. SC2 encodes proteins SAT11 to SAT16, the largest of which encodes the putative reducing PKS SAT13. SAT11 is a cytochrome P450 monooxygenase, while SAT14 and SAT16 are probable acetyltransferases. The SC2 cluster may be regulated by the transcription factor SAT15. SC3 is a small cluster that encodes 5 proteins, SAT17 to SAT21. SAT21 is a putative MFS-type transporter which may have a role in exporting secondary metabolites. The four other proteins putatively encoded in SC3 include the taurine hydroxylase-like protein SAT17, the O-methyltransferase SAT18, the acetyltransferase SAT19, and the Cys6-type zinc finger SAT20, the latter being probably involved in regulation of SC3 expression. This chain is Non-reducing polyketide synthase SAT8, found in Stachybotrys chartarum (strain CBS 109288 / IBT 7711) (Toxic black mold).